Consider the following 267-residue polypeptide: Glutamate 5-kinase (267 aa).

K18 provides a ligand contact to ATP. Residues S58, D145, and N157 each coordinate substrate. ATP-binding positions include 177–178 (SD) and 219–225 (TGGMATK).

Belongs to the glutamate 5-kinase family.

The protein localises to the cytoplasm. The enzyme catalyses L-glutamate + ATP = L-glutamyl 5-phosphate + ADP. It functions in the pathway amino-acid biosynthesis; L-proline biosynthesis; L-glutamate 5-semialdehyde from L-glutamate: step 1/2. Functionally, catalyzes the transfer of a phosphate group to glutamate to form L-glutamate 5-phosphate. The polypeptide is Glutamate 5-kinase (Clostridium tetani (strain Massachusetts / E88)).